Reading from the N-terminus, the 120-residue chain is BolA-like protein 2 (120 aa).

The protein belongs to the BolA/IbaG family. Interacts with FRA1, GRX3 and GRX4.

The protein localises to the cytoplasm. The protein resides in the nucleus. Involved in the regulation of the iron regulon in response to decreased mitochondrial iron-sulfur cluster synthesis. May be involved in mitochondrial organization and biogenesis. This chain is BolA-like protein 2 (BOL2), found in Saccharomyces cerevisiae (strain ATCC 204508 / S288c) (Baker's yeast).